The chain runs to 64 residues: Cold shock protein CapA (64 aa).

In terms of domain architecture, CSD spans 7–64 (GTVKWFNDEKGFGFITPQGGGDDLFVHFKAIESDGFKSLKEGQTVSFVAEKGQKGMQA).

The protein localises to the cytoplasm. Functionally, affects cell viability at low temperatures. The sequence is that of Cold shock protein CapA (capA) from Pseudomonas fragi.